Consider the following 200-residue polypeptide: BmK-YA precursor (200 aa).

The N-terminal stretch at 1–23 (MIFHQFYSILILCLIFPNQVVQS) is a signal peptide. A propeptide spanning residues 24–34 (DKERQDWIPSD) is cleaved from the precursor. A disordered region spans residues 30 to 200 (WIPSDYGGYM…GYMNPAGRSD (171 aa)). Ala42 bears the Alanine amide mark. Residues 45 to 100 (SDEERQDWIPSDYGGHMNPAGRSDEERQDWIPSDYGGHMNPAGRSNEERQDWIPSD) constitute a propeptide that is removed on maturation. Ala108 is modified (alanine amide). A propeptide spanning residues 111–144 (SDEERQDWIPSDYGGHMNPAGRSNEERQDWIPSD) is cleaved from the precursor. Position 152 is an alanine amide (Ala152). Positions 155-188 (SDEERQDWIPSDYGGHMNPAGRSDEERQDWIPSD) are excised as a propeptide. At Ala196 the chain carries Alanine amide. Positions 199 to 200 (SD) are excised as a propeptide.

Venom gland.

The protein localises to the secreted. In terms of biological role, synthetic BmK-YA activates human opioid receptors in vitro, with highest activity on the delta-type/OPRD1 receptor (EC(50)=2.5 uM) and lower activity on mu-type/OPRM1 and kappa-type/OPRK1 receptors (EC(50)=17 uM and 30 uM, respectively). This Olivierus martensii (Manchurian scorpion) protein is BmK-YA precursor.